An 89-amino-acid chain; its full sequence is Small ribosomal subunit protein uS14 (89 aa).

Belongs to the universal ribosomal protein uS14 family. In terms of assembly, part of the 30S ribosomal subunit. Contacts proteins S3 and S10.

Binds 16S rRNA, required for the assembly of 30S particles and may also be responsible for determining the conformation of the 16S rRNA at the A site. In Flavobacterium psychrophilum (strain ATCC 49511 / DSM 21280 / CIP 103535 / JIP02/86), this protein is Small ribosomal subunit protein uS14.